The sequence spans 71 residues: uncharacterized protein (71 aa).

This is an uncharacterized protein from Saccharomyces cerevisiae (strain ATCC 204508 / S288c) (Baker's yeast).